The sequence spans 709 residues: U3 small nucleolar RNA-associated protein 25 (709 aa).

A disordered region spans residues 1–156; sequence MVKRTGNGTD…DERDPFESHF (156 aa). Positions 22–36 are enriched in basic and acidic residues; it reads DLRSIRRARNDKEPV. Positions 37–66 are enriched in acidic residues; the sequence is EEPEIPVASEEDGELSEDSEEDATNEVQEQ. The segment covering 82–91 has biased composition (basic and acidic residues); the sequence is KSEHPEDRQR. 2 stretches are compositionally biased toward acidic residues: residues 105 to 116 and 126 to 150; these read SSDDELSEDEKG and PGEEEPQSEEELSEGDEDESEDERD.

Belongs to the UTP25 family. As to quaternary structure, component of the ribosomal small subunit (SSU) processome composed of at least 40 protein subunits and snoRNA U3.

The protein resides in the nucleus. It is found in the nucleolus. In terms of biological role, DEAD-box RNA helicase-like protein required for pre-18S rRNA processing, specifically at sites A0, A1, and A2. This is U3 small nucleolar RNA-associated protein 25 (UTP25) from Zygosaccharomyces rouxii (strain ATCC 2623 / CBS 732 / NBRC 1130 / NCYC 568 / NRRL Y-229).